The following is a 141-amino-acid chain: Large ribosomal subunit protein uL11 (141 aa).

This sequence belongs to the universal ribosomal protein uL11 family. In terms of assembly, part of the ribosomal stalk of the 50S ribosomal subunit. Interacts with L10 and the large rRNA to form the base of the stalk. L10 forms an elongated spine to which L12 dimers bind in a sequential fashion forming a multimeric L10(L12)X complex. In terms of processing, one or more lysine residues are methylated.

Its function is as follows. Forms part of the ribosomal stalk which helps the ribosome interact with GTP-bound translation factors. In Chlorobium luteolum (strain DSM 273 / BCRC 81028 / 2530) (Pelodictyon luteolum), this protein is Large ribosomal subunit protein uL11.